Reading from the N-terminus, the 542-residue chain is Malolactic enzyme (542 aa).

The active-site Proton donor is tyrosine 92. Residue lysine 165 is the Proton acceptor of the active site. Residue lysine 165 coordinates substrate. Mn(2+) is bound by residues glutamate 236, aspartate 237, and aspartate 260. Residues alanine 293 to alanine 296, asparagine 405, and asparagine 450 contribute to the NAD(+) site. Residue asparagine 450 coordinates substrate.

It belongs to the malic enzymes family. In terms of assembly, homodimer. Mn(2+) is required as a cofactor. The cofactor is NAD(+).

It catalyses the reaction (S)-malate + H(+) = (S)-lactate + CO2. With respect to regulation, oxamate, fructose-1,6-diphosphate and L-lactate act as non-competitive inhibitors, whereas succinate, citrate and tartrate isomers produce a competitive inhibition. Functionally, involved in the malolactic fermentation (MLF) of wine, which results in a natural decrease in acidity and favorable changes in wine flavors. Catalyzes the decarboxylation of L-malate to L-lactate. In Leuconostoc mesenteroides, this protein is Malolactic enzyme (mleS).